The following is a 380-amino-acid chain: Erythronate-4-phosphate dehydrogenase (380 aa).

S45 and T66 together coordinate substrate. NAD(+) contacts are provided by residues 126–127 (QV), D146, T174, 205–207 (ASR), and D231. R207 is an active-site residue. Residue E236 is part of the active site. Catalysis depends on H253, which acts as the Proton donor. G256 is a binding site for NAD(+). Y257 contributes to the substrate binding site.

Belongs to the D-isomer specific 2-hydroxyacid dehydrogenase family. PdxB subfamily. Homodimer.

The protein localises to the cytoplasm. It catalyses the reaction 4-phospho-D-erythronate + NAD(+) = (R)-3-hydroxy-2-oxo-4-phosphooxybutanoate + NADH + H(+). The protein operates within cofactor biosynthesis; pyridoxine 5'-phosphate biosynthesis; pyridoxine 5'-phosphate from D-erythrose 4-phosphate: step 2/5. Functionally, catalyzes the oxidation of erythronate-4-phosphate to 3-hydroxy-2-oxo-4-phosphonooxybutanoate. This chain is Erythronate-4-phosphate dehydrogenase, found in Azotobacter vinelandii (strain DJ / ATCC BAA-1303).